The following is a 439-amino-acid chain: MRRISSRLSLVLFAALSCATALFPAHAANPRSVEVDHIAAVVNNEVITARELRERVEQAIHQLNRQGTPQPPADVLERQLLERLVLERAQLQLARETSLQVDEATLERAIARIAESNRLTIAQLQAALEKDGVSWSRFRDNIRTEILLTRLREREVDNRIVVTDAEVDNFLANNADALSGEEFELAHILIRVPEAATQQQMAGLVARAETAKQRLNSGDDFARVAASYSDAPDAMNGGALGWRSRDRLPPLFAEAVRELSPGSVSPVLRSSAGLHIVKLLDRRGGAAAGPQQLEQTRARHILIRTSEILNDSEAESRLLGLRERVVNGASFAELAKAHSADLSSAKGGDLGWLSPGDTVPEFERTMNALKPGEVSAPVRSPFGWHLIQVEARRLQDVSDERKRNAARNALRERKADEAFEDWLRQLRDRTYVEYRTGKE.

An N-terminal signal peptide occupies residues 1 to 27 (MRRISSRLSLVLFAALSCATALFPAHA). PpiC domains are found at residues 180 to 281 (GEEF…KLLD) and 293 to 391 (LEQT…QVEA).

The protein localises to the periplasm. It catalyses the reaction [protein]-peptidylproline (omega=180) = [protein]-peptidylproline (omega=0). Chaperone involved in the correct folding and assembly of outer membrane proteins. Recognizes specific patterns of aromatic residues and the orientation of their side chains, which are found more frequently in integral outer membrane proteins. May act in both early periplasmic and late outer membrane-associated steps of protein maturation. This chain is Chaperone SurA, found in Aromatoleum aromaticum (strain DSM 19018 / LMG 30748 / EbN1) (Azoarcus sp. (strain EbN1)).